The chain runs to 407 residues: 1-deoxy-D-xylulose 5-phosphate reductoisomerase (407 aa).

Residues Thr-25, Gly-26, Ser-27, Ile-28, Asn-53, and Asn-136 each coordinate NADPH. Lys-137 is a binding site for 1-deoxy-D-xylulose 5-phosphate. An NADPH-binding site is contributed by Glu-138. Asp-162 serves as a coordination point for Mn(2+). 1-deoxy-D-xylulose 5-phosphate is bound by residues Ser-163, Glu-164, Ser-188, and His-211. A Mn(2+)-binding site is contributed by Glu-164. Gly-217 provides a ligand contact to NADPH. The 1-deoxy-D-xylulose 5-phosphate site is built by Ser-224, Asn-229, Lys-230, and Glu-233. Position 233 (Glu-233) interacts with Mn(2+).

It belongs to the DXR family. Requires Mg(2+) as cofactor. It depends on Mn(2+) as a cofactor.

The enzyme catalyses 2-C-methyl-D-erythritol 4-phosphate + NADP(+) = 1-deoxy-D-xylulose 5-phosphate + NADPH + H(+). The protein operates within isoprenoid biosynthesis; isopentenyl diphosphate biosynthesis via DXP pathway; isopentenyl diphosphate from 1-deoxy-D-xylulose 5-phosphate: step 1/6. Catalyzes the NADPH-dependent rearrangement and reduction of 1-deoxy-D-xylulose-5-phosphate (DXP) to 2-C-methyl-D-erythritol 4-phosphate (MEP). The polypeptide is 1-deoxy-D-xylulose 5-phosphate reductoisomerase (Nitrobacter winogradskyi (strain ATCC 25391 / DSM 10237 / CIP 104748 / NCIMB 11846 / Nb-255)).